A 191-amino-acid polypeptide reads, in one-letter code: Adenine phosphoribosyltransferase (191 aa).

The protein belongs to the purine/pyrimidine phosphoribosyltransferase family. Homodimer.

The protein resides in the cytoplasm. It carries out the reaction AMP + diphosphate = 5-phospho-alpha-D-ribose 1-diphosphate + adenine. It participates in purine metabolism; AMP biosynthesis via salvage pathway; AMP from adenine: step 1/1. Catalyzes a salvage reaction resulting in the formation of AMP, that is energically less costly than de novo synthesis. The sequence is that of Adenine phosphoribosyltransferase from Nocardia farcinica (strain IFM 10152).